The chain runs to 338 residues: Anthranilate phosphoribosyltransferase (338 aa).

5-phospho-alpha-D-ribose 1-diphosphate-binding positions include G81, 84–85 (GD), S89, 91–94 (NVST), 109–117 (KHGNRALSS), and A121. Residue G81 coordinates anthranilate. A Mg(2+)-binding site is contributed by S93. N112 contributes to the anthranilate binding site. R167 contributes to the anthranilate binding site. Positions 226 and 227 each coordinate Mg(2+).

Belongs to the anthranilate phosphoribosyltransferase family. Homodimer. Mg(2+) is required as a cofactor.

The enzyme catalyses N-(5-phospho-beta-D-ribosyl)anthranilate + diphosphate = 5-phospho-alpha-D-ribose 1-diphosphate + anthranilate. Its pathway is amino-acid biosynthesis; L-tryptophan biosynthesis; L-tryptophan from chorismate: step 2/5. In terms of biological role, catalyzes the transfer of the phosphoribosyl group of 5-phosphorylribose-1-pyrophosphate (PRPP) to anthranilate to yield N-(5'-phosphoribosyl)-anthranilate (PRA). The protein is Anthranilate phosphoribosyltransferase of Rhodopseudomonas palustris (strain BisB5).